Consider the following 533-residue polypeptide: Calcineurin-interacting protein 3 (533 aa).

Disordered regions lie at residues 1–30, 53–85, and 359–404; these read MRSL…NMDI, PRKQ…YTKR, and MDMS…LTLP. Positions 61–85 are enriched in basic and acidic residues; the sequence is KRAEPVSEEHRKKESSKNSREYTKR. Positions 359–372 are enriched in polar residues; it reads MDMSQTLSPEQTLS. A compositionally biased stretch (basic and acidic residues) spans 373–384; that stretch reads PREKLQVQDRKI.

Its subcellular location is the nucleus. The protein is Calcineurin-interacting protein 3 of Caenorhabditis elegans.